The chain runs to 829 residues: Periplasmic nitrate reductase (829 aa).

The segment at residues 1 to 36 (MARRDFIKQTAAAAAATVAGVPLTGYTQNIVTESEA) is a signal peptide (tat-type signal). The region spanning 39 to 95 (LKWSKAPCRFCGTGCGVNVAVKDNQVVATHGDFNAEVNKGLNCVKGYFLSKIMYGSD) is the 4Fe-4S Mo/W bis-MGD-type domain. [4Fe-4S] cluster contacts are provided by C46, C49, C53, and C81. Mo-bis(molybdopterin guanine dinucleotide) is bound by residues K83, Q150, N175, C179, 212-219 (WGSNMAEM), 243-247 (STFEH), 262-264 (QSD), M373, Q377, N483, 509-510 (SD), K532, D559, and 719-728 (TGRVLEHWHS). W795 provides a ligand contact to substrate. 2 residues coordinate Mo-bis(molybdopterin guanine dinucleotide): N803 and K820.

The protein belongs to the prokaryotic molybdopterin-containing oxidoreductase family. NasA/NapA/NarB subfamily. In terms of assembly, component of the periplasmic nitrate reductase NapAB complex composed of NapA and NapB. It depends on [4Fe-4S] cluster as a cofactor. The cofactor is Mo-bis(molybdopterin guanine dinucleotide). Predicted to be exported by the Tat system. The position of the signal peptide cleavage has not been experimentally proven.

The protein resides in the periplasm. The enzyme catalyses 2 Fe(II)-[cytochrome] + nitrate + 2 H(+) = 2 Fe(III)-[cytochrome] + nitrite + H2O. In terms of biological role, catalytic subunit of the periplasmic nitrate reductase complex NapAB. Receives electrons from NapB and catalyzes the reduction of nitrate to nitrite. This Bordetella bronchiseptica (strain ATCC BAA-588 / NCTC 13252 / RB50) (Alcaligenes bronchisepticus) protein is Periplasmic nitrate reductase.